We begin with the raw amino-acid sequence, 178 residues long: Ribonuclease M5 (178 aa).

In terms of domain architecture, Toprim spans 4-100 (NEFIVVEGRD…KIGVEHADLI (97 aa)). 3 residues coordinate Mg(2+): E10, D56, and D58.

This sequence belongs to the ribonuclease M5 family. Requires Mg(2+) as cofactor.

Its subcellular location is the cytoplasm. It catalyses the reaction Endonucleolytic cleavage of RNA, removing 21 and 42 nucleotides, respectively, from the 5'- and 3'-termini of a 5S-rRNA precursor.. Functionally, required for correct processing of both the 5' and 3' ends of 5S rRNA precursor. Cleaves both sides of a double-stranded region yielding mature 5S rRNA in one step. In Staphylococcus aureus (strain NCTC 8325 / PS 47), this protein is Ribonuclease M5.